The chain runs to 390 residues: 5-hydroxytryptamine receptor 1B (390 aa).

Positions 1–21 (MEETGAQCAPPPPAGSQTGVS) are disordered. Over 1–46 (MEETGAQCAPPPPAGSQTGVSQVNLSAAPSHNCSTEGYVYQDSVAL) the chain is Extracellular. N-linked (GlcNAc...) asparagine glycosylation is found at N24 and N32. The chain crosses the membrane as a helical span at residues 47 to 72 (PWKVLLVVLLALITLATTLSNAFVIA). Topologically, residues 73 to 86 (TVYRTRKLHTPANY) are cytoplasmic. The helical transmembrane segment at 87-111 (LIASLAVTDLLVSILVMPISTMYVV) threads the bilayer. Topologically, residues 112–119 (TGRWTLGQ) are extracellular. A helical membrane pass occupies residues 120–145 (VVCDFWLSSDITCCTASILHLCVIAL). C122 and C199 are oxidised to a cystine. 2 residues coordinate ergotamine: D129 and T134. The DRY motif; important for ligand-induced conformation changes and signaling motif lies at 146–148 (DRY). Residues 146–165 (DRYWAITDAVEYSAKRTPKR) lie on the Cytoplasmic side of the membrane. The helical transmembrane segment at 166 to 184 (AAVMIALVWVFSISISLPP) threads the bilayer. Residues 185–205 (FFWRQAKAEEEVLDCLVNTDH) are Extracellular-facing. An ergotamine-binding site is contributed by V201. A helical transmembrane segment spans residues 206–229 (ILYTVYSTVGAFYFPTLLLIALYS). Residues 230 to 315 (RIYVEARSRI…AARERKATKT (86 aa)) lie on the Cytoplasmic side of the membrane. Residues 251–282 (LTRAQLMTDSPGSTSSVTSINSRAPDVPSESG) form a disordered region. The span at 255-272 (QLMTDSPGSTSSVTSINS) shows a compositional bias: polar residues. A helical membrane pass occupies residues 316–337 (LGIILGAFIVCWLPFFIISLVM). The Extracellular segment spans residues 338 to 347 (PICKDACWFH). Residues 348-370 (LAIFDFFTWLGYLNSLINPIIYT) traverse the membrane as a helical segment. The NPxxY motif; important for ligand-induced conformation changes and signaling motif lies at 365–369 (NPIIY). The Cytoplasmic portion of the chain corresponds to 371–390 (MSNEDFKQAFHKLIRFKCAS). The S-palmitoyl cysteine moiety is linked to residue C388.

This sequence belongs to the G-protein coupled receptor 1 family. As to quaternary structure, homodimer. Heterodimer with HTR1D. Phosphorylated. Desensitization of the receptor may be mediated by its phosphorylation. In terms of processing, palmitoylated.

It localises to the cell membrane. Functionally, G-protein coupled receptor for 5-hydroxytryptamine (serotonin). Also functions as a receptor for ergot alkaloid derivatives, various anxiolytic and antidepressant drugs and other psychoactive substances, such as lysergic acid diethylamide (LSD). Ligand binding causes a conformation change that triggers signaling via guanine nucleotide-binding proteins (G proteins) and modulates the activity of downstream effectors, such as adenylate cyclase. HTR1B is coupled to G(i)/G(o) G alpha proteins and mediates inhibitory neurotransmission by inhibiting adenylate cyclase activity. Arrestin family members inhibit signaling via G proteins and mediate activation of alternative signaling pathways. Regulates the release of 5-hydroxytryptamine, dopamine and acetylcholine in the brain, and thereby affects neural activity, nociceptive processing, pain perception, mood and behavior. Besides, plays a role in vasoconstriction of cerebral arteries. The sequence is that of 5-hydroxytryptamine receptor 1B (HTR1B) from Equus caballus (Horse).